Here is a 791-residue protein sequence, read N- to C-terminus: KN motif and ankyrin repeat domain-containing protein 3 (791 aa).

Disordered regions lie at residues 1–37 (MAKF…SVET), 56–181 (RGPA…GPAQ), 254–312 (ATSD…ETRE), 401–425 (GCTE…GDEM), and 463–514 (YESS…GDCE). Polar residues predominate over residues 25–34 (SARSPSSPYS). Residues 105 to 125 (LSPGAFPGLSLPPLSPRSLSR) show a composition bias toward low complexity. The segment covering 127 to 149 (PRVEHTLLETSRRLEQAQARERA) has biased composition (basic and acidic residues). Phosphoserine is present on residues serine 151, serine 159, serine 163, serine 166, serine 167, and serine 176. The span at 158–180 (RSPRGSGRSSPAPNPALASPGPA) shows a compositional bias: low complexity. The stretch at 180-229 (AQLQLVREQMAAALRRLRELEDQARALPELQEQVRALRAEKARLLAGRVQ) forms a coiled coil. 2 stretches are compositionally biased toward basic and acidic residues: residues 254–280 (ATSD…RRSE) and 293–312 (PDGE…ETRE). Position 279 is a phosphoserine (serine 279). The segment covering 401–410 (GCTEKTTQTE) has biased composition (polar residues). Positions 485-496 (SSSSGSDDSSGG) are enriched in low complexity. Residues 505-514 (HNDKDAGDCE) show a composition bias toward basic and acidic residues. ANK repeat units lie at residues 606–636 (NGNT…DVNH), 640–677 (AGYS…AKAS), 679–708 (TGQT…DVNV), 712–742 (DGAT…DLTI), and 746–775 (EGTS…SNHQ). Residues 772 to 783 (SNHQGQSSTGSP) show a composition bias toward polar residues. Residues 772–791 (SNHQGQSSTGSPTAKECNDK) form a disordered region.

Its function is as follows. May be involved in the control of cytoskeleton formation by regulating actin polymerization. This is KN motif and ankyrin repeat domain-containing protein 3 from Mus musculus (Mouse).